The primary structure comprises 385 residues: S-adenosylmethionine synthase (385 aa).

His-16 contributes to the ATP binding site. Asp-18 provides a ligand contact to Mg(2+). Glu-44 is a K(+) binding site. L-methionine-binding residues include Glu-57 and Gln-100. The interval 100-110 is flexible loop; that stretch reads QSPDINQGVDR. Residues 164–166, 230–231, Asp-239, 245–246, Ala-262, and Lys-266 contribute to the ATP site; these read DGK, KF, and RK. Position 239 (Asp-239) interacts with L-methionine. An L-methionine-binding site is contributed by Lys-270.

Belongs to the AdoMet synthase family. As to quaternary structure, homotetramer; dimer of dimers. Mg(2+) serves as cofactor. The cofactor is K(+).

The protein resides in the cytoplasm. It carries out the reaction L-methionine + ATP + H2O = S-adenosyl-L-methionine + phosphate + diphosphate. Its pathway is amino-acid biosynthesis; S-adenosyl-L-methionine biosynthesis; S-adenosyl-L-methionine from L-methionine: step 1/1. In terms of biological role, catalyzes the formation of S-adenosylmethionine (AdoMet) from methionine and ATP. The overall synthetic reaction is composed of two sequential steps, AdoMet formation and the subsequent tripolyphosphate hydrolysis which occurs prior to release of AdoMet from the enzyme. The polypeptide is S-adenosylmethionine synthase (Helicobacter pylori (strain G27)).